A 979-amino-acid chain; its full sequence is Translation initiation factor IF-2 (979 aa).

The segment at 33-391 (VKSHSSTITT…TPPAEITLTE (359 aa)) is disordered. Low complexity-rich tracts occupy residues 54 to 63 (QKRPQAPKAQ) and 139 to 150 (AKTTSPKAEPAA). Residues 151–166 (PAAPKPKLMGPPPRPT) are compositionally biased toward pro residues. Over residues 234-252 (PELDEEPDTNNVEGDDDAT) the composition is skewed to acidic residues. Basic residues-rich tracts occupy residues 263 to 278 (PAAK…PSKR) and 294 to 303 (TKTSKLKRRP). Residues 314–328 (GTTTNNNAEVPSVSL) are compositionally biased toward polar residues. The span at 371 to 380 (KEQRRDRPDV) shows a compositional bias: basic and acidic residues. One can recognise a tr-type G domain in the interval 468 to 641 (HRPPVVTIMG…LLVSEIEELS (174 aa)). The interval 477–484 (GHVDHGKT) is G1. Residue 477–484 (GHVDHGKT) coordinates GTP. The segment at 502–506 (GITQH) is G2. Positions 527-530 (DTPG) are G3. Residues 527–531 (DTPGH) and 581–584 (NKMD) each bind GTP. Residues 581-584 (NKMD) are G4. The segment at 617–619 (SAL) is G5.

It belongs to the TRAFAC class translation factor GTPase superfamily. Classic translation factor GTPase family. IF-2 subfamily.

It is found in the cytoplasm. Its function is as follows. One of the essential components for the initiation of protein synthesis. Protects formylmethionyl-tRNA from spontaneous hydrolysis and promotes its binding to the 30S ribosomal subunits. Also involved in the hydrolysis of GTP during the formation of the 70S ribosomal complex. The polypeptide is Translation initiation factor IF-2 (Picosynechococcus sp. (strain ATCC 27264 / PCC 7002 / PR-6) (Agmenellum quadruplicatum)).